The following is a 95-amino-acid chain: Large ribosomal subunit protein uL23 (95 aa).

It belongs to the universal ribosomal protein uL23 family. Part of the 50S ribosomal subunit. Contacts protein L29, and trigger factor when it is bound to the ribosome.

Functionally, one of the early assembly proteins it binds 23S rRNA. One of the proteins that surrounds the polypeptide exit tunnel on the outside of the ribosome. Forms the main docking site for trigger factor binding to the ribosome. The sequence is that of Large ribosomal subunit protein uL23 from Shouchella clausii (strain KSM-K16) (Alkalihalobacillus clausii).